Reading from the N-terminus, the 406-residue chain is Multifunctional CCA protein (406 aa).

ATP is bound by residues G8 and R11. Residues G8 and R11 each contribute to the CTP site. Residues D21 and D23 each coordinate Mg(2+). The ATP site is built by R91, R138, and R141. 3 residues coordinate CTP: R91, R138, and R141. Positions T229–L331 constitute an HD domain.

It belongs to the tRNA nucleotidyltransferase/poly(A) polymerase family. Bacterial CCA-adding enzyme type 1 subfamily. Monomer. Can also form homodimers and oligomers. Mg(2+) serves as cofactor. Requires Ni(2+) as cofactor.

The catalysed reaction is a tRNA precursor + 2 CTP + ATP = a tRNA with a 3' CCA end + 3 diphosphate. The enzyme catalyses a tRNA with a 3' CCA end + 2 CTP + ATP = a tRNA with a 3' CCACCA end + 3 diphosphate. Its function is as follows. Catalyzes the addition and repair of the essential 3'-terminal CCA sequence in tRNAs without using a nucleic acid template. Adds these three nucleotides in the order of C, C, and A to the tRNA nucleotide-73, using CTP and ATP as substrates and producing inorganic pyrophosphate. tRNA 3'-terminal CCA addition is required both for tRNA processing and repair. Also involved in tRNA surveillance by mediating tandem CCA addition to generate a CCACCA at the 3' terminus of unstable tRNAs. While stable tRNAs receive only 3'-terminal CCA, unstable tRNAs are marked with CCACCA and rapidly degraded. This Stenotrophomonas maltophilia (strain K279a) protein is Multifunctional CCA protein.